We begin with the raw amino-acid sequence, 237 residues long: 4-hydroxy-tetrahydrodipicolinate reductase (237 aa).

NAD(+) is bound by residues 11–16, 92–94, and 116–119; these read GASGRM, GTT, and GSNF. The active-site Proton donor/acceptor is the H148. H149 contacts (S)-2,3,4,5-tetrahydrodipicolinate. The active-site Proton donor is the K152. 158–159 lines the (S)-2,3,4,5-tetrahydrodipicolinate pocket; that stretch reads GS.

This sequence belongs to the DapB family.

The protein localises to the cytoplasm. It carries out the reaction (S)-2,3,4,5-tetrahydrodipicolinate + NAD(+) + H2O = (2S,4S)-4-hydroxy-2,3,4,5-tetrahydrodipicolinate + NADH + H(+). The catalysed reaction is (S)-2,3,4,5-tetrahydrodipicolinate + NADP(+) + H2O = (2S,4S)-4-hydroxy-2,3,4,5-tetrahydrodipicolinate + NADPH + H(+). It functions in the pathway amino-acid biosynthesis; L-lysine biosynthesis via DAP pathway; (S)-tetrahydrodipicolinate from L-aspartate: step 4/4. Its function is as follows. Catalyzes the conversion of 4-hydroxy-tetrahydrodipicolinate (HTPA) to tetrahydrodipicolinate. This chain is 4-hydroxy-tetrahydrodipicolinate reductase, found in Xylella fastidiosa (strain M12).